A 254-amino-acid polypeptide reads, in one-letter code: Transmembrane protein 269 (254 aa).

5 helical membrane passes run 44–64 (IINA…FCSF), 69–89 (YCAS…GTMT), 113–135 (LASA…IYVL), 171–191 (LTKG…LFMI), and 210–230 (IVYI…TAFY).

The protein localises to the membrane. In Mus musculus (Mouse), this protein is Transmembrane protein 269.